The following is a 327-amino-acid chain: UPF0665 family protein C23C4.06c (327 aa).

This sequence belongs to the UPF0665 family.

It localises to the cytoplasm. The protein localises to the nucleus. In Schizosaccharomyces pombe (strain 972 / ATCC 24843) (Fission yeast), this protein is UPF0665 family protein C23C4.06c.